Here is a 373-residue protein sequence, read N- to C-terminus: Cobalt-precorrin-5B C(1)-methyltransferase (373 aa).

The protein belongs to the CbiD family.

It carries out the reaction Co-precorrin-5B + S-adenosyl-L-methionine = Co-precorrin-6A + S-adenosyl-L-homocysteine. It participates in cofactor biosynthesis; adenosylcobalamin biosynthesis; cob(II)yrinate a,c-diamide from sirohydrochlorin (anaerobic route): step 6/10. Functionally, catalyzes the methylation of C-1 in cobalt-precorrin-5B to form cobalt-precorrin-6A. The protein is Cobalt-precorrin-5B C(1)-methyltransferase of Polaromonas sp. (strain JS666 / ATCC BAA-500).